A 1258-amino-acid chain; its full sequence is Structural polyprotein (1258 aa).

Positions proline 41–proline 75 are host transcription inhibition. The tract at residues arginine 59–arginine 114 is disordered. Residues glutamine 68 to proline 109 carry the Nuclear localization signal motif. Basic residues-rich tracts occupy residues glutamine 69 to proline 84 and threonine 93 to arginine 114. The interval lysine 96 to isoleucine 124 is binding to the viral RNA. The tract at residues proline 109 to cysteine 123 is ribosome-binding. The cysteines at positions 123 and 138 are disulfide-linked. The Peptidase S3 domain occupies cysteine 123–tryptophan 271. The Charge relay system role is filled by histidine 149. The Nuclear export signal motif lies at isoleucine 154–phenylalanine 164. Residues lysine 165–tyrosine 170 form an interaction with spike glycoprotein E2 region. Aspartate 171 functions as the Charge relay system in the catalytic mechanism. The dimerization of the capsid protein stretch occupies residues proline 193 to alanine 203. Catalysis depends on serine 223, which acts as the Charge relay system. The tract at residues aspartate 229–arginine 233 is dimerization of the capsid protein. The tract at residues threonine 272–leucine 284 is functions as an uncleaved signal peptide for the precursor of protein E3/E2. 9 disulfides stabilise this stretch: cysteine 279–cysteine 288, cysteine 293–cysteine 297, cysteine 296–cysteine 328, cysteine 356–cysteine 462, cysteine 359–cysteine 365, cysteine 428–cysteine 442, cysteine 490–cysteine 601, cysteine 538–cysteine 562, and cysteine 540–cysteine 557. A glycan (N-linked (GlcNAc...) asparagine; by host) is linked at asparagine 283. Over glycine 338–glycine 696 the chain is Extracellular. Interaction with host Mxra8 receptor stretches follow at residues glutamine 363–tyrosine 366 and histidine 399–tryptophan 401. Residues threonine 521 to lysine 524 are interaction with host Mxra8 receptor. A glycan (N-linked (GlcNAc...) asparagine; by host) is linked at asparagine 537. An interaction with host Mxra8 receptor region spans residues glutamate 553–valine 559. The N-linked (GlcNAc...) asparagine; by host glycan is linked to asparagine 598. Residues leucine 697 to leucine 717 form a helical membrane-spanning segment. The Cytoplasmic segment spans residues serine 718 to alanine 758. Residues serine 726–lysine 730 form an interaction with the capsid protein region. 3 S-palmitoyl cysteine; by host lipidation sites follow: cysteine 731, cysteine 751, and cysteine 752. Residues cysteine 731–cysteine 751 are transient transmembrane before p62-6K protein processing. Cysteine 731 and cysteine 752 form a disulfide bridge. At alanine 759–glutamine 773 the chain is on the extracellular side. The chain crosses the membrane as a helical span at residues threonine 774–leucine 794. The Cytoplasmic segment spans residues arginine 795–histidine 796. The helical transmembrane segment at leucine 797–threonine 817 threads the bilayer. 2 consecutive stretches face the extracellular side: residues glutamine 818–alanine 819 and tyrosine 820–glycine 1234. 4 disulfides stabilise this stretch: cysteine 868/cysteine 933, cysteine 881/cysteine 913, cysteine 882/cysteine 915, and cysteine 887/cysteine 897. Positions valine 903–threonine 920 are E1 fusion peptide loop. 2 N-linked (GlcNAc...) asparagine; by host glycosylation sites follow: asparagine 960 and asparagine 1089. 4 disulfides stabilise this stretch: cysteine 1078/cysteine 1090, cysteine 1120/cysteine 1195, cysteine 1125/cysteine 1199, and cysteine 1147/cysteine 1189. A helical membrane pass occupies residues glycine 1235–phenylalanine 1255. Cysteine 1252 carries S-palmitoyl cysteine; by host lipidation. At serine 1256 to histidine 1258 the chain is on the cytoplasmic side.

In terms of assembly, homodimer. Homomultimer. Interacts with host karyopherin KPNA4; this interaction allows the nuclear import of the viral capsid protein. Interacts with spike glycoprotein E2. Interacts with host IRAK1; the interaction leads to inhibition of IRAK1-dependent signaling. As to quaternary structure, the precursor of protein E3/E2 and E1 form a heterodimer shortly after synthesis. The precursor of protein E3/E2 and E1 form a heterodimer shortly after synthesis. Processing of the precursor of protein E3/E2 into E2 and E3 results in a heterodimer of the spike glycoproteins E2 and E1. Spike at virion surface are constituted of a trimer of E2-E1 heterodimers. After target cell attachment and endocytosis, E1 change conformation to form homotrimers. Interacts with 6K protein. In terms of assembly, interacts with spike glycoprotein E1. Processing of the precursor of protein E3/E2 into E2 and E3 results in a heterodimer of the spike glycoproteins E2 and E1. Spike at virion surface are constituted of a trimer of E2-E1 heterodimers. Interacts with 6K protein. Interacts with host MXRA8; this interaction mediates virus entry. As to quaternary structure, oligomer. Interacts with spike glycoprotein E1. Interacts with spike glycoprotein E2. Post-translationally, structural polyprotein: Specific enzymatic cleavages in vivo yield mature proteins. Capsid protein is auto-cleaved during polyprotein translation, unmasking a signal peptide at the N-terminus of the precursor of E3/E2. The remaining polyprotein is then targeted to the host endoplasmic reticulum, where host signal peptidase cleaves it into pE2, 6K and E1 proteins. pE2 is further processed to mature E3 and E2 by host furin in trans-Golgi vesicle. Palmitoylated via thioester bonds. These palmitoylations may induce disruption of the C-terminus transmembrane. This would result in the reorientation of E2 C-terminus from lumenal to cytoplasmic side. In terms of processing, N-glycosylated. Post-translationally, palmitoylated via thioester bonds.

It localises to the virion. The protein localises to the host cytoplasm. The protein resides in the host cell membrane. Its subcellular location is the host nucleus. It is found in the virion membrane. It localises to the host Golgi apparatus. The protein localises to the host trans-Golgi network. The protein resides in the host endoplasmic reticulum. The catalysed reaction is Autocatalytic release of the core protein from the N-terminus of the togavirus structural polyprotein by hydrolysis of a -Trp-|-Ser- bond.. In terms of biological role, forms an icosahedral capsid with a T=4 symmetry composed of 240 copies of the capsid protein surrounded by a lipid membrane through which penetrate 80 spikes composed of trimers of E1-E2 heterodimers. The capsid protein binds to the viral RNA genome at a site adjacent to a ribosome binding site for viral genome translation following genome release. Possesses a protease activity that results in its autocatalytic cleavage from the nascent structural protein. Following its self-cleavage, the capsid protein transiently associates with ribosomes, and within several minutes the protein binds to viral RNA and rapidly assembles into icosahedric core particles. The resulting nucleocapsid eventually associates with the cytoplasmic domain of the spike glycoprotein E2 at the cell membrane, leading to budding and formation of mature virions. In case of infection, new virions attach to target cells and after clathrin-mediated endocytosis their membrane fuses with the host endosomal membrane. This leads to the release of the nucleocapsid into the cytoplasm, followed by an uncoating event necessary for the genomic RNA to become accessible. The uncoating might be triggered by the interaction of capsid proteins with ribosomes. Binding of ribosomes would release the genomic RNA since the same region is genomic RNA-binding and ribosome-binding. Specifically inhibits interleukin-1 receptor-associated kinase 1/IRAK1-dependent signaling during viral entry, representing a means by which the alphaviruses may evade innate immune detection and activation prior to viral gene expression. Provides the signal sequence for the translocation of the precursor of protein E3/E2 to the host endoplasmic reticulum. Furin-cleaved E3 remains associated with spike glycoprotein E1 and mediates pH protection of the latter during the transport via the secretory pathway. After virion release from the host cell, the assembly protein E3 is gradually released in the extracellular space. Functionally, plays a role in viral attachment to target host cell, by binding to the cell receptor MXRA8. Synthesized as a p62 precursor which is processed by furin at the cell membrane just before virion budding, giving rise to E2-E1 heterodimer. The p62-E1 heterodimer is stable, whereas E2-E1 is unstable and dissociate at low pH. p62 is processed at the last step, presumably to avoid E1 fusion activation before its final export to cell surface. E2 C-terminus contains a transitory transmembrane that would be disrupted by palmitoylation, resulting in reorientation of the C-terminal tail from lumenal to cytoplasmic side. This step is critical since E2 C-terminus is involved in budding by interacting with capsid proteins. This release of E2 C-terminus in cytoplasm occurs lately in protein export, and precludes premature assembly of particles at the endoplasmic reticulum membrane. Its function is as follows. Acts as a viroporin that participates in virus glycoprotein processing and transport to the plasma membrane, cell permeabilization and budding of viral particles. Disrupts the calcium homeostasis of the cell, probably at the endoplasmic reticulum level. This leads to cytoplasmic calcium elevation. Because of its lipophilic properties, the 6K protein is postulated to influence the selection of lipids that interact with the transmembrane domains of the glycoproteins, which, in turn, affects the deformability of the bilayer required for the extreme curvature that occurs as budding proceeds. Present in low amount in virions, about 3% compared to viral glycoproteins. In terms of biological role, class II viral fusion protein. Fusion activity is inactive as long as E1 is bound to E2 in mature virion. After virus attachment to target cell and endocytosis, acidification of the endosome induce dissociation of E1/E2 heterodimer and concomitant trimerization of the E1 subunits. This E1 trimer is fusion active, and promotes release of viral nucleocapsid in cytoplasm after endosome and viral membrane fusion. Efficient fusion requires the presence of cholesterol and sphingolipid in the target membrane. This chain is Structural polyprotein, found in Middelburg virus.